We begin with the raw amino-acid sequence, 108 residues long: Insertion element IS629 uncharacterized 12 kDa protein S4062 (108 aa).

Belongs to the transposase 8 family.

The sequence is that of Insertion element IS629 uncharacterized 12 kDa protein S4062 from Shigella flexneri.